A 731-amino-acid polypeptide reads, in one-letter code: 1,4-alpha-glucan branching enzyme GlgB (731 aa).

Aspartate 411 serves as the catalytic Nucleophile. Glutamate 464 (proton donor) is an active-site residue.

It belongs to the glycosyl hydrolase 13 family. GlgB subfamily. Monomer.

The enzyme catalyses Transfers a segment of a (1-&gt;4)-alpha-D-glucan chain to a primary hydroxy group in a similar glucan chain.. The protein operates within glycan biosynthesis; glycogen biosynthesis. Its function is as follows. Catalyzes the formation of the alpha-1,6-glucosidic linkages in glycogen by scission of a 1,4-alpha-linked oligosaccharide from growing alpha-1,4-glucan chains and the subsequent attachment of the oligosaccharide to the alpha-1,6 position. In Mycobacterium ulcerans (strain Agy99), this protein is 1,4-alpha-glucan branching enzyme GlgB.